The sequence spans 126 residues: Large ribosomal subunit protein bL20c (126 aa).

It belongs to the bacterial ribosomal protein bL20 family.

Its subcellular location is the plastid. It is found in the chloroplast. Binds directly to 23S ribosomal RNA and is necessary for the in vitro assembly process of the 50S ribosomal subunit. It is not involved in the protein synthesizing functions of that subunit. In Pelargonium hortorum (Common geranium), this protein is Large ribosomal subunit protein bL20c.